The chain runs to 118 residues: Large ribosomal subunit protein uL22c (118 aa).

Belongs to the universal ribosomal protein uL22 family. As to quaternary structure, part of the 50S ribosomal subunit.

It is found in the plastid. The protein resides in the chloroplast. In terms of biological role, this protein binds specifically to 23S rRNA. Its function is as follows. The globular domain of the protein is located near the polypeptide exit tunnel on the outside of the subunit, while an extended beta-hairpin is found that lines the wall of the exit tunnel in the center of the 70S ribosome. The chain is Large ribosomal subunit protein uL22c (rpl22) from Rhodomonas salina (Cryptomonas salina).